A 385-amino-acid polypeptide reads, in one-letter code: MKRISLIGGTGSIGVQTCDVIEQHPDLFELEAYAFGTNVEVATEWINRLRPKYVSATSIEVLEQLKPRLTYEPLYFIGPEGLKECATAERADIVVTAVVGAVGLEPTLAAIQAGKDIALANKETLVTAGHLVKAAVKEHGVNLLPVDSEHSAIYQCLNGERREDVSKIILTASGGSFRDRSRDELADVTVEDALNHPNWSMGAKITIDSATMFNKGLEVIEAHWLFDIDYNDIEVILHRESIIHSMVEFKDAAVMAQLGNPDMRGPILYALSGPKRLEIEGNKRLNLKEIGKLHFEEADFNRYPALRLAFEAGRAGGSMPTVLNAANEVAVDLFLNGQITFLEIERLVEDAMARHEVIAEPTLAQILEVDRAVRQQIQQGIEGGE.

NADPH-binding residues include threonine 10, glycine 11, serine 12, isoleucine 13, glycine 36, asparagine 38, and asparagine 121. Lysine 122 contributes to the 1-deoxy-D-xylulose 5-phosphate binding site. Glutamate 123 contributes to the NADPH binding site. Aspartate 147 contributes to the Mn(2+) binding site. Positions 148, 149, 173, and 196 each coordinate 1-deoxy-D-xylulose 5-phosphate. Mn(2+) is bound at residue glutamate 149. Residue glycine 202 participates in NADPH binding. Residues serine 209, asparagine 214, lysine 215, and glutamate 218 each coordinate 1-deoxy-D-xylulose 5-phosphate. Glutamate 218 lines the Mn(2+) pocket.

This sequence belongs to the DXR family. Mg(2+) is required as a cofactor. The cofactor is Mn(2+).

It catalyses the reaction 2-C-methyl-D-erythritol 4-phosphate + NADP(+) = 1-deoxy-D-xylulose 5-phosphate + NADPH + H(+). The protein operates within isoprenoid biosynthesis; isopentenyl diphosphate biosynthesis via DXP pathway; isopentenyl diphosphate from 1-deoxy-D-xylulose 5-phosphate: step 1/6. Functionally, catalyzes the NADPH-dependent rearrangement and reduction of 1-deoxy-D-xylulose-5-phosphate (DXP) to 2-C-methyl-D-erythritol 4-phosphate (MEP). The polypeptide is 1-deoxy-D-xylulose 5-phosphate reductoisomerase (Exiguobacterium sp. (strain ATCC BAA-1283 / AT1b)).